The sequence spans 260 residues: Proteasome subunit alpha (260 aa).

It belongs to the peptidase T1A family. In terms of assembly, the 20S proteasome core is composed of 14 alpha and 14 beta subunits that assemble into four stacked heptameric rings, resulting in a barrel-shaped structure. The two inner rings, each composed of seven catalytic beta subunits, are sandwiched by two outer rings, each composed of seven alpha subunits. The catalytic chamber with the active sites is on the inside of the barrel. Has a gated structure, the ends of the cylinder being occluded by the N-termini of the alpha-subunits. Is capped at one or both ends by the proteasome regulatory ATPase, PAN.

It localises to the cytoplasm. With respect to regulation, the formation of the proteasomal ATPase PAN-20S proteasome complex, via the docking of the C-termini of PAN into the intersubunit pockets in the alpha-rings, triggers opening of the gate for substrate entry. Interconversion between the open-gate and close-gate conformations leads to a dynamic regulation of the 20S proteasome proteolysis activity. Functionally, component of the proteasome core, a large protease complex with broad specificity involved in protein degradation. The chain is Proteasome subunit alpha from Thermococcus kodakarensis (strain ATCC BAA-918 / JCM 12380 / KOD1) (Pyrococcus kodakaraensis (strain KOD1)).